Consider the following 1384-residue polypeptide: Contactin-associated protein 1 (1384 aa).

Positions 1 to 19 are cleaved as a signal peptide; sequence MMHLRLFCILLAAVSGAEG. The Extracellular segment spans residues 20 to 1283; sequence WGYYGCDEEL…PYYHDEGWVA (1264 aa). The 144-residue stretch at 25–168 folds into the F5/8 type C domain; the sequence is CDEELVGPLY…IGLRLGLYGC (144 aa). Residues C25 and C168 are joined by a disulfide bond. N-linked (GlcNAc...) asparagine glycosylation is found at N120, N128, and N276. 2 consecutive Laminin G-like domains span residues 203 to 355 and 389 to 538; these read FKTE…AFRC and FRTW…FDTC. C323 and C355 are oxidised to a cystine. Residues N420, N499, and N518 are each glycosylated (N-linked (GlcNAc...) asparagine). Disulfide bonds link C506–C538, C544–C555, C549–C564, and C566–C576. The region spanning 540 to 577 is the EGF-like 1 domain; the sequence is ITDRCSPNMCEHDGRCYQSWDDFICYCELTGYKGETCH. In terms of domain architecture, Fibrinogen C-terminal spans 576-795; it reads CHTPLYKESC…NTISFHTGAA (220 aa). Residues N597, N653, N664, N763, N804, N843, N860, N948, and N956 are each glycosylated (N-linked (GlcNAc...) asparagine). The Laminin G-like 3 domain maps to 813–956; sequence FRTSAPSGVF…ANASEGTSPN (144 aa). 4 disulfides stabilise this stretch: C930/C957, C961/C974, C968/C983, and C985/C995. The EGF-like 2 domain maps to 957–996; the sequence is CTGHCAHPRLPCFHGGRCVERYSYYTCDCDLTAFDGPYCN. N1078 and N1147 each carry an N-linked (GlcNAc...) asparagine glycan. In terms of domain architecture, Laminin G-like 4 spans 1088-1250; sequence FSTSSAPAVL…VQGELSESNC (163 aa). A disulfide bond links C1209 and C1250. The helical transmembrane segment at 1284 to 1304 threads the bilayer; that stretch reads ILLGFLVAFLLLGLVGMLVLF. Over 1305-1384 the chain is Cytoplasmic; that stretch reads YLQNHRYKGS…PQILEESRSE (80 aa). The segment covering 1319–1328 has biased composition (basic and acidic residues); sequence EPKAAHEYHP. Residues 1319-1384 are disordered; sequence EPKAAHEYHP…PQILEESRSE (66 aa). The short motif at 1328 to 1369 is the SH3-binding element; the sequence is PGSKPPLPTSGPAQVPTPTAAPNQAPASAPAPAPTPAPAPGP. The segment covering 1339-1355 has biased composition (low complexity); that stretch reads PAQVPTPTAAPNQAPAS. Residues 1356–1368 show a composition bias toward pro residues; that stretch reads APAPAPTPAPAPG. A Phosphoserine modification is found at S1383.

Belongs to the neurexin family. Interacts with CNTN1/contactin in cis form. Predominantly expressed in brain. Weak expression detected in ovary, pancreas, colon, lung, heart, intestine and testis.

It is found in the membrane. It localises to the cell junction. The protein localises to the paranodal septate junction. Its function is as follows. Required, with CNTNAP2, for radial and longitudinal organization of myelinated axons. Plays a role in the formation of functional distinct domains critical for saltatory conduction of nerve impulses in myelinated nerve fibers. Demarcates the paranodal region of the axo-glial junction. In association with contactin involved in the signaling between axons and myelinating glial cells. The chain is Contactin-associated protein 1 (CNTNAP1) from Homo sapiens (Human).